The sequence spans 396 residues: Na(+)/H(+) antiporter NhaA 1 (396 aa).

12 helical membrane-spanning segments follow: residues 9-29, 59-79, 95-115, 125-145, 154-174, 177-197, 200-220, 223-243, 260-280, 281-301, 332-352, and 373-393; these read LHNEAASGVLIFLAAVAAMLI, LLLWINDGLMAVFFLLVGLEL, VLPVVGAVGGIVGPALIYVMF, GWAVPTATDIAFAMGVLALLG, LFLLTLAIIDDLVAIVIIAIF, SDLSVGSLTVAGGAIALLFLL, IGVKGIAPYVLVGMVLWVAVL, GVHATLAGVVLAMAIPIKGET, VVGLVILPLFAFANAGVSLAG, LGLNVLLEPVAMGIGLGLLLG, GVALLCGIGFTMSLFISSLAF, and ILSGSLVSGVLGYLVLRFSLA.

Belongs to the NhaA Na(+)/H(+) (TC 2.A.33) antiporter family.

It is found in the cell inner membrane. The enzyme catalyses Na(+)(in) + 2 H(+)(out) = Na(+)(out) + 2 H(+)(in). Its function is as follows. Na(+)/H(+) antiporter that extrudes sodium in exchange for external protons. In Magnetococcus marinus (strain ATCC BAA-1437 / JCM 17883 / MC-1), this protein is Na(+)/H(+) antiporter NhaA 1.